A 367-amino-acid polypeptide reads, in one-letter code: Zorya protein ZorE (367 aa).

In terms of biological role, component of antiviral defense system Zorya type II, composed of ZorA, ZorB and ZorE. Expression of Zorya type II in E.coli (strain MG1655) confers resistance to phages SECphi7 and T7. While most T7 infected Zorya-containing cells undergo abortive infection, a minority produce viable phage progeny. These eventually accumulate to a high multiplicity of infection, leading to culture collapse by 170 minutes after initial infection. ZorA and ZorB probably assemble in the cell inner membrane and exert their effect there. This may be a nuclease. In Escherichia coli (strain ATCC 8739 / DSM 1576 / NBRC 3972 / NCIMB 8545 / WDCM 00012 / Crooks), this protein is Zorya protein ZorE.